The following is an 814-amino-acid chain: MMILSIIATVVLLGALFYHRVSLFLSSLILLAWTAALGVAGLWSIWLLVPLAIILVPFNLTPMRKSMISAPVFRGFRKVMPPMSRTEKEAIDAGTTWWEGDLFQGKPDWKKLHNYPQPQLTAEEQAFLDGPVEEACRMANDFQITHELADLPPELWAYLKEHRFFAMIIKKEYGGLEFSAYAQSRVLQKLSGVSGILAITVGVPNSLGPGELLQHYGTEEQKNHYLPRLARGQEIPCFALTSPEAGSDAGAIPDTGVVCMGEWQGQQVLGMRLTWNKRYITLAPIATVLGLAFKLSDPDRLLGGEEELGITCALIPTSTPGVEIGRRHFPLNVPFQNGPTRGNDIFVPIDYIIGGPKMAGQGWRMLVECLSVGRGITLPSNSTGGVKSVALATGAYAHIRRQFKISIGKMEGIEEPLARIAGNAYVMDAAASLITYGIMLGEKPAVLSAIVKYHCTHRGQQSIIDAMDITGGKGIMLGESNFLARAYQGAPIAITVEGANILTRSMMIFGQGAIRCHPYVLEEMAAAQNNDVNAFDKLLFKHIGHVGSNTVRSFWLGLTRGLTSHTPTGDATKRYYQHLNRLSANLALLSDVSMAVLGGSLKRRERISARLGDVLSQLYLASAVLKRYDDEGRHEADLPLVHWGVQDALYRAEQAMDDLLQNFPNRVVAGLLTAMIFPTGRHYLAPSDKLDHAVAKILQVPNATRSRIGRGQYLTPAEHNPVGLLEEALRDVIAADPIHQRICKELGKNLPFTRLDELARNALAKGLIDKDEAAILAKAEESRLRSINVDDFEPEALATKPVKLPEKVRKVEAA.

Glu497 serves as the catalytic Proton acceptor.

This sequence belongs to the acyl-CoA dehydrogenase family. The cofactor is FAD.

It carries out the reaction a medium-chain 2,3-saturated fatty acyl-CoA + oxidized [electron-transfer flavoprotein] + H(+) = a medium-chain (2E)-enoyl-CoA + reduced [electron-transfer flavoprotein]. The enzyme catalyses a long-chain 2,3-saturated fatty acyl-CoA + oxidized [electron-transfer flavoprotein] + H(+) = a long-chain (2E)-enoyl-CoA + reduced [electron-transfer flavoprotein]. It participates in lipid metabolism; fatty acid beta-oxidation. Its function is as follows. Catalyzes the dehydrogenation of acyl-coenzymes A (acyl-CoAs) to 2-enoyl-CoAs, the first step of the beta-oxidation cycle of fatty acid degradation. Is required for S.typhimurium to utilize medium- and long-chain fatty acids as sole carbon sources for growth. Is needed for bacterial survival during carbone-source starvation. The chain is Acyl-coenzyme A dehydrogenase (fadE) from Salmonella typhimurium (strain LT2 / SGSC1412 / ATCC 700720).